Reading from the N-terminus, the 670-residue chain is MTFSVQHAEIHFNQNHIPVSDQFDDVYFSNENGLAETDYVFLQGNQLWERWITHKDANFVIAETGFGTGLNFFAVTKLFREFRQQHENHPLKRLNFISFEKYPLKITALLQAHLACPQFEDLSAHLQRYWPSLILGCHRIHFGETTLDLWFGDVSENLPQLGDYMNERINAWFLDGFAPSKNPEMWNDDLYNLMFRFTKPNGTFATFTAASAVRKGLESAGFNVTKRKGFGKKRECLSGLKIQSKSTALSTPWYLAQPAKMEKQDVAIIGGGIASLCAAISLIKRGAKVTIYCEDDALALNASGNKQGAFYPQLSDDNALTVDFYLHAFSYGRQLLDWAIEQNIVFEHEFCGVALCAYNEKSAVKLTKISQLGLPNEIFQMLSAEQLSEKVGLPLNCEGGWIEQGAWLAPRQFVQNAFSFLEKQGVVIKTAQKITALSQLEKGWELKNMQGQKYCHEVVILANGHKITDFVQTEKLPLYPIRGQVSQIPTSENLLKLKSVLCYDGYLTPANQLKTSHCIGASMFRDNVDRDFSEQEQQENQQKLQQNIAQPWTQDVDTSDNLARVGIRCSVRDLAPMVGNVPHFEQQQADYYNLFNLRRRKQPIQSAANFQNLFLIAALGSRGLTSAPLLGETLASIIYGEPLPISEGILHNLSANRAWVKKWLKGSKVE.

A tRNA (mnm(5)s(2)U34)-methyltransferase region spans residues 1 to 242 (MTFSVQHAEI…KRECLSGLKI (242 aa)). The segment at 269-670 (IGGGIASLCA…KKWLKGSKVE (402 aa)) is FAD-dependent cmnm(5)s(2)U34 oxidoreductase.

It in the N-terminal section; belongs to the methyltransferase superfamily. tRNA (mnm(5)s(2)U34)-methyltransferase family. In the C-terminal section; belongs to the DAO family. It depends on FAD as a cofactor.

It is found in the cytoplasm. The enzyme catalyses 5-aminomethyl-2-thiouridine(34) in tRNA + S-adenosyl-L-methionine = 5-methylaminomethyl-2-thiouridine(34) in tRNA + S-adenosyl-L-homocysteine + H(+). Catalyzes the last two steps in the biosynthesis of 5-methylaminomethyl-2-thiouridine (mnm(5)s(2)U) at the wobble position (U34) in tRNA. Catalyzes the FAD-dependent demodification of cmnm(5)s(2)U34 to nm(5)s(2)U34, followed by the transfer of a methyl group from S-adenosyl-L-methionine to nm(5)s(2)U34, to form mnm(5)s(2)U34. The protein is tRNA 5-methylaminomethyl-2-thiouridine biosynthesis bifunctional protein MnmC of Haemophilus influenzae (strain ATCC 51907 / DSM 11121 / KW20 / Rd).